A 419-amino-acid chain; its full sequence is UDP-N-acetylglucosamine 1-carboxyvinyltransferase (419 aa).

Residue 22–23 (KN) coordinates phosphoenolpyruvate. Residue arginine 95 participates in UDP-N-acetyl-alpha-D-glucosamine binding. Residue cysteine 119 is the Proton donor of the active site. The residue at position 119 (cysteine 119) is a 2-(S-cysteinyl)pyruvic acid O-phosphothioketal. Residues 164–167 (KVSV), aspartate 308, and isoleucine 330 contribute to the UDP-N-acetyl-alpha-D-glucosamine site.

This sequence belongs to the EPSP synthase family. MurA subfamily.

The protein resides in the cytoplasm. It catalyses the reaction phosphoenolpyruvate + UDP-N-acetyl-alpha-D-glucosamine = UDP-N-acetyl-3-O-(1-carboxyvinyl)-alpha-D-glucosamine + phosphate. Its pathway is cell wall biogenesis; peptidoglycan biosynthesis. Its function is as follows. Cell wall formation. Adds enolpyruvyl to UDP-N-acetylglucosamine. This is UDP-N-acetylglucosamine 1-carboxyvinyltransferase from Rickettsia rickettsii (strain Iowa).